The following is a 183-amino-acid chain: Peptidyl-tRNA hydrolase (183 aa).

Tyrosine 15 serves as a coordination point for tRNA. Histidine 20 acts as the Proton acceptor in catalysis. Positions 67 and 69 each coordinate tRNA.

This sequence belongs to the PTH family. Monomer.

The protein localises to the cytoplasm. The catalysed reaction is an N-acyl-L-alpha-aminoacyl-tRNA + H2O = an N-acyl-L-amino acid + a tRNA + H(+). In terms of biological role, hydrolyzes ribosome-free peptidyl-tRNAs (with 1 or more amino acids incorporated), which drop off the ribosome during protein synthesis, or as a result of ribosome stalling. Its function is as follows. Catalyzes the release of premature peptidyl moieties from peptidyl-tRNA molecules trapped in stalled 50S ribosomal subunits, and thus maintains levels of free tRNAs and 50S ribosomes. In Chlamydia abortus (strain DSM 27085 / S26/3) (Chlamydophila abortus), this protein is Peptidyl-tRNA hydrolase.